Here is a 590-residue protein sequence, read N- to C-terminus: Mitochondrial distribution and morphology protein 34 (590 aa).

The 225-residue stretch at Met-1–Gln-225 folds into the SMP-LTD domain. Positions Arg-393–Lys-405 are enriched in basic residues. A disordered region spans residues Arg-393 to Asp-456. Residues Pro-413–Ala-427 show a composition bias toward polar residues.

The protein belongs to the MDM34 family. As to quaternary structure, component of the ER-mitochondria encounter structure (ERMES) or MDM complex, composed of MMM1, MDM10, MDM12 and MDM34.

Its subcellular location is the mitochondrion outer membrane. Functionally, component of the ERMES/MDM complex, which serves as a molecular tether to connect the endoplasmic reticulum (ER) and mitochondria. Components of this complex are involved in the control of mitochondrial shape and protein biogenesis, and function in nonvesicular lipid trafficking between the ER and mitochondria. MDM34 is required for the interaction of the ER-resident membrane protein MMM1 and the outer mitochondrial membrane-resident beta-barrel protein MDM10. The sequence is that of Mitochondrial distribution and morphology protein 34 from Eremothecium gossypii (strain ATCC 10895 / CBS 109.51 / FGSC 9923 / NRRL Y-1056) (Yeast).